Reading from the N-terminus, the 156-residue chain is Arginine repressor (156 aa).

Belongs to the ArgR family.

It is found in the cytoplasm. It functions in the pathway amino-acid biosynthesis; L-arginine biosynthesis [regulation]. In terms of biological role, regulates arginine biosynthesis genes. The protein is Arginine repressor of Edwardsiella ictaluri (strain 93-146).